The sequence spans 95 residues: Co-chaperonin GroES (95 aa).

Belongs to the GroES chaperonin family. Heptamer of 7 subunits arranged in a ring. Interacts with the chaperonin GroEL.

It is found in the cytoplasm. Functionally, together with the chaperonin GroEL, plays an essential role in assisting protein folding. The GroEL-GroES system forms a nano-cage that allows encapsulation of the non-native substrate proteins and provides a physical environment optimized to promote and accelerate protein folding. GroES binds to the apical surface of the GroEL ring, thereby capping the opening of the GroEL channel. The polypeptide is Co-chaperonin GroES (Francisella tularensis subsp. tularensis (strain FSC 198)).